Here is a 174-residue protein sequence, read N- to C-terminus: Peptide methionine sulfoxide reductase MsrA (174 aa).

Residue Cys11 is part of the active site.

Belongs to the MsrA Met sulfoxide reductase family.

The enzyme catalyses L-methionyl-[protein] + [thioredoxin]-disulfide + H2O = L-methionyl-(S)-S-oxide-[protein] + [thioredoxin]-dithiol. It catalyses the reaction [thioredoxin]-disulfide + L-methionine + H2O = L-methionine (S)-S-oxide + [thioredoxin]-dithiol. Has an important function as a repair enzyme for proteins that have been inactivated by oxidation. Catalyzes the reversible oxidation-reduction of methionine sulfoxide in proteins to methionine. This Pasteurella multocida (strain Pm70) protein is Peptide methionine sulfoxide reductase MsrA.